The primary structure comprises 224 residues: LOB domain-containing protein 15 (224 aa).

Residues 44 to 145 enclose the LOB domain; the sequence is TPCAACKLLR…AELTAVRSEI (102 aa). Residues 171-224 form a disordered region; sequence SGGVSVIAPPPQRPTTPPQPTTAHPPSPSSCVFSQPTTRDLEYGNIESENNYFG. Pro residues predominate over residues 178–198; the sequence is APPPQRPTTPPQPTTAHPPSP.

This sequence belongs to the LOB domain-containing protein family. Expressed in young shoots, roots, stems, leaves and flowers.

This Arabidopsis thaliana (Mouse-ear cress) protein is LOB domain-containing protein 15 (LBD15).